The primary structure comprises 391 residues: 3-ketoacyl-CoA thiolase (391 aa).

The active-site Acyl-thioester intermediate is Cys95. Catalysis depends on proton acceptor residues His347 and Cys377.

Belongs to the thiolase-like superfamily. Thiolase family. In terms of assembly, heterotetramer of two alpha chains (FadB) and two beta chains (FadA).

The protein localises to the cytoplasm. The catalysed reaction is an acyl-CoA + acetyl-CoA = a 3-oxoacyl-CoA + CoA. The protein operates within lipid metabolism; fatty acid beta-oxidation. Functionally, catalyzes the final step of fatty acid oxidation in which acetyl-CoA is released and the CoA ester of a fatty acid two carbons shorter is formed. The sequence is that of 3-ketoacyl-CoA thiolase from Ectopseudomonas oleovorans (Pseudomonas oleovorans).